Reading from the N-terminus, the 243-residue chain is MSLVLLPAVDVANGEAVRLVQGEAGSETSYGSPRDAALAWQEAGAEWVHLVDLDAAFGRGSNRELLAKVVGELDVKVELSGGIRDDDSLEAALATGCARVNLGTAALEDPQWCARAIAKHGERIAVGLDVRIIDGDYRLRGRGWVSDGGDLWEVLERLERDGCSRYVVTDVTKDGTLTGPNLELLSEVCAATEAPVIASGGVSAIEDLVAIAGLVPEGVEGAIVGKALYAGRFTLPEALAAVR.

The active-site Proton acceptor is D10. D129 (proton donor) is an active-site residue.

Belongs to the HisA/HisF family.

It localises to the cytoplasm. It carries out the reaction 1-(5-phospho-beta-D-ribosyl)-5-[(5-phospho-beta-D-ribosylamino)methylideneamino]imidazole-4-carboxamide = 5-[(5-phospho-1-deoxy-D-ribulos-1-ylimino)methylamino]-1-(5-phospho-beta-D-ribosyl)imidazole-4-carboxamide. Its pathway is amino-acid biosynthesis; L-histidine biosynthesis; L-histidine from 5-phospho-alpha-D-ribose 1-diphosphate: step 4/9. This chain is 1-(5-phosphoribosyl)-5-[(5-phosphoribosylamino)methylideneamino] imidazole-4-carboxamide isomerase, found in Nocardia farcinica (strain IFM 10152).